A 240-amino-acid chain; its full sequence is 2,3-bisphosphoglycerate-dependent phosphoglycerate mutase (240 aa).

Substrate is bound by residues 5-12 (RHGESVWN), 18-19 (TG), Arg-57, 84-87 (ERHY), Lys-95, 111-112 (RR), and 180-181 (GN). His-6 acts as the Tele-phosphohistidine intermediate in catalysis. Glu-84 acts as the Proton donor/acceptor in catalysis.

Belongs to the phosphoglycerate mutase family. BPG-dependent PGAM subfamily. As to quaternary structure, homodimer.

The catalysed reaction is (2R)-2-phosphoglycerate = (2R)-3-phosphoglycerate. Its pathway is carbohydrate degradation; glycolysis; pyruvate from D-glyceraldehyde 3-phosphate: step 3/5. Functionally, catalyzes the interconversion of 2-phosphoglycerate and 3-phosphoglycerate. This Nitrosococcus oceani (strain ATCC 19707 / BCRC 17464 / JCM 30415 / NCIMB 11848 / C-107) protein is 2,3-bisphosphoglycerate-dependent phosphoglycerate mutase.